The sequence spans 797 residues: uncharacterized protein (797 aa).

The segment covering 394 to 403 (SDDRDDRDKD) has biased composition (basic and acidic residues). The segment at 394-724 (SDDRDDRDKD…GTKDKEGNAN (331 aa)) is disordered. Over residues 404–713 (EYELENEEYN…GEDEGEDEGD (310 aa)) the composition is skewed to acidic residues.

It belongs to the herpesviridae BBRF2 family.

This is an uncharacterized protein from Saimiriine herpesvirus 2 (strain 11) (SaHV-2).